The primary structure comprises 295 residues: Nucleotide-binding protein BH3569 (295 aa).

14–21 (GMSGAGKT) lines the ATP pocket. 65–68 (DLRG) provides a ligand contact to GTP.

The protein belongs to the RapZ-like family.

In terms of biological role, displays ATPase and GTPase activities. The sequence is that of Nucleotide-binding protein BH3569 from Halalkalibacterium halodurans (strain ATCC BAA-125 / DSM 18197 / FERM 7344 / JCM 9153 / C-125) (Bacillus halodurans).